The chain runs to 84 residues: Cell division topological specificity factor (84 aa).

This sequence belongs to the MinE family.

Functionally, prevents the cell division inhibition by proteins MinC and MinD at internal division sites while permitting inhibition at polar sites. This ensures cell division at the proper site by restricting the formation of a division septum at the midpoint of the long axis of the cell. The sequence is that of Cell division topological specificity factor from Pseudomonas syringae pv. tomato (strain ATCC BAA-871 / DC3000).